A 299-amino-acid chain; its full sequence is Ribosomal RNA small subunit methyltransferase H (299 aa).

Residues glycine 36–histidine 38, aspartate 55, aspartate 103, and glutamine 110 each bind S-adenosyl-L-methionine. Composition is skewed to basic and acidic residues over residues lysine 268 to arginine 282 and arginine 289 to aspartate 299. Residues lysine 268–aspartate 299 form a disordered region.

The protein belongs to the methyltransferase superfamily. RsmH family.

Its subcellular location is the cytoplasm. The enzyme catalyses cytidine(1402) in 16S rRNA + S-adenosyl-L-methionine = N(4)-methylcytidine(1402) in 16S rRNA + S-adenosyl-L-homocysteine + H(+). Functionally, specifically methylates the N4 position of cytidine in position 1402 (C1402) of 16S rRNA. The chain is Ribosomal RNA small subunit methyltransferase H from Thermotoga petrophila (strain ATCC BAA-488 / DSM 13995 / JCM 10881 / RKU-1).